A 680-amino-acid chain; its full sequence is DNA-directed RNA polymerase subunit beta' (680 aa).

Positions 69, 71, 87, and 90 each coordinate Zn(2+). Mg(2+)-binding residues include aspartate 489, aspartate 491, and aspartate 493.

It belongs to the RNA polymerase beta' chain family. RpoC1 subfamily. As to quaternary structure, in plastids the minimal PEP RNA polymerase catalytic core is composed of four subunits: alpha, beta, beta', and beta''. When a (nuclear-encoded) sigma factor is associated with the core the holoenzyme is formed, which can initiate transcription. The cofactor is Mg(2+). Zn(2+) is required as a cofactor.

The protein resides in the plastid. The protein localises to the chloroplast. The catalysed reaction is RNA(n) + a ribonucleoside 5'-triphosphate = RNA(n+1) + diphosphate. Its function is as follows. DNA-dependent RNA polymerase catalyzes the transcription of DNA into RNA using the four ribonucleoside triphosphates as substrates. The polypeptide is DNA-directed RNA polymerase subunit beta' (Olimarabidopsis pumila (Dwarf rocket)).